A 141-amino-acid chain; its full sequence is MDKKYDITAVLNDDSSINAVSDNFQITLDARPKEKSKGINPLSAFLAGLAACELATANAMAAAKMITLNKALINIKGYRLTNPSDGYFGLRELNIHWEIHSPNEEEEIKEFIDFVSKRCPAHNTLHGTSNFKINISVTLVH.

This sequence belongs to the OsmC/Ohr family. In terms of assembly, homodimer.

Its subcellular location is the cytoplasm. Reduces organic and inorganic peroxide substrates. Protects the cell against oxidative stress. The polypeptide is Hydroperoxide reductase (Mycoplasma genitalium (strain ATCC 33530 / DSM 19775 / NCTC 10195 / G37) (Mycoplasmoides genitalium)).